The primary structure comprises 79 residues: MSGGGVFTDILAAAGRIFEVMVEGHWETVGMLFDSLGKGTMRINRNAYGSMGGGSLRGSSPEVSGYAVPTKEVESKFAK.

Residue His25 coordinates a bacteriochlorophyll c.

It belongs to the BChl C/E-binding protein family.

Its subcellular location is the chlorosome. It is found in the chlorosome envelope. Functionally, component of the photosynthetic apparatus. The light harvesting B740 complex binds bacteriochlorophyll c. The sequence is that of Bacteriochlorophyll c-binding protein (csmA) from Chlorobaculum tepidum (strain ATCC 49652 / DSM 12025 / NBRC 103806 / TLS) (Chlorobium tepidum).